We begin with the raw amino-acid sequence, 425 residues long: Dipeptidase tcpJ (425 aa).

Zn(2+)-binding residues include His46, Asp48, and Glu158. 3 residues coordinate substrate: His185, Arg259, and Asp318.

It belongs to the metallo-dependent hydrolases superfamily. Peptidase M19 family. Zn(2+) serves as cofactor.

The catalysed reaction is an L-aminoacyl-L-amino acid + H2O = 2 an L-alpha-amino acid. Its function is as follows. Dipeptidase; part of the gene cluster that mediates the biosynthesis of an unusual class of epipolythiodioxopiperazines (ETPs) lacking the reactive thiol group important for toxicity. Firstly, L-tyrosine is prenylated by tcpD, before undergoing condensation with L-glycine in a reaction catalyzed by the NRPS tcpP leading to the diketopiperazine (DKP) backbone. Afterwards the alpha-carbon of tyrosine is oxidized by the cytochrome P450 tcpC to form a hydroxyl group. However, in contrast other ETP biosynthesis pathways studied so far, tcpC is not able to bishydroxylate the DKP at both alpha-carbon positions, but hydroxylates the alpha-carbon of the tyrosine part and the nitrogen of the glycine part. The next steps involve an alpha,beta-elimination reaction catalyzed by tcpI, a methylation by the methyltransferase tcpN the action of the four enzyme cascade tcpG/K/J/I. Due to a dysfunctional cytochrome P450 monooxygenase tcpC, the pathway leads to the biosynthesis of probable non-toxic metabolites lacking the reactive thiol group. The chain is Dipeptidase tcpJ from Claviceps purpurea (strain 20.1) (Ergot fungus).